Consider the following 318-residue polypeptide: NADH-ubiquinone oxidoreductase chain 1 (318 aa).

Helical transmembrane passes span phenylalanine 2–leucine 22, methionine 69–leucine 89, phenylalanine 98–tryptophan 118, isoleucine 140–phenylalanine 160, histidine 171–alanine 191, leucine 222–phenylalanine 242, glutamate 253–isoleucine 273, and leucine 285–isoleucine 305.

It belongs to the complex I subunit 1 family. As to quaternary structure, core subunit of respiratory chain NADH dehydrogenase (Complex I) which is composed of 45 different subunits.

The protein resides in the mitochondrion inner membrane. The enzyme catalyses a ubiquinone + NADH + 5 H(+)(in) = a ubiquinol + NAD(+) + 4 H(+)(out). Functionally, core subunit of the mitochondrial membrane respiratory chain NADH dehydrogenase (Complex I) which catalyzes electron transfer from NADH through the respiratory chain, using ubiquinone as an electron acceptor. Essential for the catalytic activity and assembly of complex I. The sequence is that of NADH-ubiquinone oxidoreductase chain 1 (MT-ND1) from Saguinus leucopus (Silvery-brown bare-face tamarin).